Reading from the N-terminus, the 447-residue chain is Sporulation protein YpeB (447 aa).

The protein belongs to the YpeB family.

Its function is as follows. Required for spore cortex hydrolysis during germination. Appears to be required for either expression, localization, activation or function of SleB. The polypeptide is Sporulation protein YpeB (Oceanobacillus iheyensis (strain DSM 14371 / CIP 107618 / JCM 11309 / KCTC 3954 / HTE831)).